Here is a 614-residue protein sequence, read N- to C-terminus: DBH-like monooxygenase protein 1 (614 aa).

Positions 1-22 (MRPLRPWALLLGALLGAAAAAA) are cleaved as a signal peptide. The Lumenal segment spans residues 23-592 (RRYPHVAVLD…SSSCLPCSLS (570 aa)). The DOMON domain occupies 35-148 (AAYRLLWGRR…STVRVIWAYH (114 aa)). An N-linked (GlcNAc...) asparagine glycan is attached at Asn-114. Tyr-203 is a catalytic residue. Disulfide bonds link Cys-205–Cys-257 and Cys-242–Cys-269. The Cu cation site is built by His-235 and His-236. The N-linked (GlcNAc...) asparagine glycan is linked to Asn-247. Cu cation contacts are provided by His-307, His-389, His-391, and Met-464. 3 disulfide bridges follow: Cys-364-Cys-480, Cys-368-Cys-550, and Cys-443-Cys-465. His-389 is an active-site residue. N-linked (GlcNAc...) asparagine glycosylation is found at Asn-476 and Asn-517. The chain crosses the membrane as a helical span at residues 593–613 (LTLLFVVYVASSTIGNFGPVV).

It belongs to the copper type II ascorbate-dependent monooxygenase family. The cofactor is Cu(2+).

The protein resides in the endoplasmic reticulum membrane. The protein is DBH-like monooxygenase protein 1 (MOXD1) of Gallus gallus (Chicken).